A 141-amino-acid chain; its full sequence is Organic hydroperoxide resistance protein-like 1 (141 aa).

The tract at residues 1–20 is disordered; the sequence is MAVNYETKATNTGGRNGHVQ.

The protein belongs to the OsmC/Ohr family.

This Staphylococcus saprophyticus subsp. saprophyticus (strain ATCC 15305 / DSM 20229 / NCIMB 8711 / NCTC 7292 / S-41) protein is Organic hydroperoxide resistance protein-like 1.